Here is a 225-residue protein sequence, read N- to C-terminus: Rho GDP-dissociation inhibitor 3 (225 aa).

This sequence belongs to the Rho GDI family. As to expression, primarily expressed in pancreas and brain.

The protein localises to the cytoplasm. In terms of biological role, inhibits GDP/GTP exchange reaction of RhoB. Interacts specifically with the GDP- and GTP-bound forms of post-translationally processed Rhob and Rhog proteins, both of which show a growth-regulated expression in mammalian cells. Stimulates the release of the GDP-bound but not the GTP-bound RhoB protein. Also inhibits the GDP/GTP exchange of RhoB but shows less ability to inhibit the dissociation of prebound GTP. In Homo sapiens (Human), this protein is Rho GDP-dissociation inhibitor 3 (ARHGDIG).